The chain runs to 311 residues: Aquaporin NIP3-1 (311 aa).

The interval Met-1–Phe-34 is disordered. Residues Gly-20 to Phe-34 show a composition bias toward low complexity. A run of 2 helical transmembrane segments spans residues Leu-85–Val-105 and Gly-111–Leu-131. Residues Asn-142 to Ser-144 carry the NPA 1 motif. Transmembrane regions (helical) follow at residues Leu-158–Leu-178, Ala-202–Thr-222, and Ala-226–Ala-246. The short motif at Asn-255–Val-257 is the NPA 2 element. Residues Trp-273–Val-293 traverse the membrane as a helical segment.

This sequence belongs to the MIP/aquaporin (TC 1.A.8) family. NIP (TC 1.A.8.12) subfamily. Expressed in roots and leaves.

Its subcellular location is the membrane. Its function is as follows. Aquaporins facilitate the transport of water and small neutral solutes across cell membranes. This Oryza sativa subsp. japonica (Rice) protein is Aquaporin NIP3-1 (NIP3-1).